We begin with the raw amino-acid sequence, 253 residues long: Cyclin-C1-2 (253 aa).

The protein belongs to the cyclin family. Cyclin C subfamily.

The polypeptide is Cyclin-C1-2 (CYCC1-2) (Arabidopsis thaliana (Mouse-ear cress)).